The sequence spans 106 residues: Aspartyl/glutamyl-tRNA(Asn/Gln) amidotransferase subunit C (106 aa).

This sequence belongs to the GatC family. As to quaternary structure, heterotrimer of A, B and C subunits.

The catalysed reaction is L-glutamyl-tRNA(Gln) + L-glutamine + ATP + H2O = L-glutaminyl-tRNA(Gln) + L-glutamate + ADP + phosphate + H(+). It catalyses the reaction L-aspartyl-tRNA(Asn) + L-glutamine + ATP + H2O = L-asparaginyl-tRNA(Asn) + L-glutamate + ADP + phosphate + 2 H(+). Allows the formation of correctly charged Asn-tRNA(Asn) or Gln-tRNA(Gln) through the transamidation of misacylated Asp-tRNA(Asn) or Glu-tRNA(Gln) in organisms which lack either or both of asparaginyl-tRNA or glutaminyl-tRNA synthetases. The reaction takes place in the presence of glutamine and ATP through an activated phospho-Asp-tRNA(Asn) or phospho-Glu-tRNA(Gln). This is Aspartyl/glutamyl-tRNA(Asn/Gln) amidotransferase subunit C from Lactiplantibacillus plantarum (strain ATCC BAA-793 / NCIMB 8826 / WCFS1) (Lactobacillus plantarum).